The chain runs to 434 residues: MFLDTAKIKVKAGNGGDGMVAFRREKYVPNGGPWGGDGGRGGNVVFVVDEGLRTLMDFRYNRHFKADSGEKGMTKGMHGRGAEDLRVRVPQGTTVRDAETGKVLTDLIEHGQEFIVAHGGRGGRGNIRFATPKNPAPEISENGEPGQERELQLELKILADVGLVGFPSVGKSTLLSVITSAKPKIGAYHFTTIVPNLGMVRTQSGESFAVADLPGLIEGASQGVGLGTQFLRHIERTRVILHIIDMSASEGRDPYEDYLAINKELESYNLRLMERPQIIVANKMDMPESQENLEDFKKKLAENYDEFEELPAIFPISGLTKQGLATLLDATAELLDKTPEFLLYDESDMEEEAYYGFDEEEKAFEISRDDDATWVLSGEKLMKLFNMTNFDRDESVMKFARQLRGMGGDEALRARGAKDGDLVRIGKFEFEFVD.

The region spanning 1–158 is the Obg domain; it reads MFLDTAKIKV…RELQLELKIL (158 aa). The OBG-type G domain maps to 159–336; it reads ADVGLVGFPS…LLDATAELLD (178 aa). Residues 165–172, 190–194, 212–215, 282–285, and 317–319 each bind GTP; these read GFPSVGKS, FTTIV, DLPG, NKMD, and SGL. Mg(2+) is bound by residues S172 and T192. Residues 356–434 enclose the OCT domain; sequence GFDEEEKAFE…IGKFEFEFVD (79 aa).

Belongs to the TRAFAC class OBG-HflX-like GTPase superfamily. OBG GTPase family. Monomer. It depends on Mg(2+) as a cofactor.

The protein localises to the cytoplasm. Functionally, an essential GTPase which binds GTP, GDP and possibly (p)ppGpp with moderate affinity, with high nucleotide exchange rates and a fairly low GTP hydrolysis rate. Plays a role in control of the cell cycle, stress response, ribosome biogenesis and in those bacteria that undergo differentiation, in morphogenesis control. The sequence is that of GTPase Obg from Streptococcus pneumoniae (strain Hungary19A-6).